Consider the following 382-residue polypeptide: 8-amino-7-oxononanoate synthase (382 aa).

2 residues coordinate substrate: R21 and H131. S178, H206, and T232 together coordinate pyridoxal 5'-phosphate. At K235 the chain carries N6-(pyridoxal phosphate)lysine. T349 provides a ligand contact to substrate.

It belongs to the class-II pyridoxal-phosphate-dependent aminotransferase family. BioF subfamily. In terms of assembly, homodimer. It depends on pyridoxal 5'-phosphate as a cofactor.

The enzyme catalyses 6-carboxyhexanoyl-[ACP] + L-alanine + H(+) = (8S)-8-amino-7-oxononanoate + holo-[ACP] + CO2. It functions in the pathway cofactor biosynthesis; biotin biosynthesis. In terms of biological role, catalyzes the decarboxylative condensation of pimeloyl-[acyl-carrier protein] and L-alanine to produce 8-amino-7-oxononanoate (AON), [acyl-carrier protein], and carbon dioxide. The protein is 8-amino-7-oxononanoate synthase of Serratia marcescens.